The following is an 82-amino-acid chain: Neuromacin (82 aa).

A signal peptide spans 1 to 23; it reads MALLNKLLCFALVFMIFGEFVTP. Intrachain disulfides connect Cys-25–Cys-32, Cys-47–Cys-51, Cys-61–Cys-69, and Cys-79–Cys-81.

It belongs to the macin family.

The protein localises to the secreted. This Hirudo medicinalis (Medicinal leech) protein is Neuromacin.